We begin with the raw amino-acid sequence, 370 residues long: Nodulation protein Z (370 aa).

Residues 47-361 (SSNDRFVVSR…NDPGRLILIE (315 aa)) form the GT23 domain.

This sequence belongs to the glycosyltransferase 23 family.

Fucosyltransferase which adds the fucose moiety of the nod factor on its terminal reducing N-acetylglucosamine end. Uses GDP-fucose as the donor group. In Bradyrhizobium diazoefficiens (strain JCM 10833 / BCRC 13528 / IAM 13628 / NBRC 14792 / USDA 110), this protein is Nodulation protein Z (nodZ).